Consider the following 160-residue polypeptide: Crossover junction endodeoxyribonuclease RuvC (160 aa).

Catalysis depends on residues Asp-9, Glu-68, and Asp-141. Mg(2+) contacts are provided by Asp-9, Glu-68, and Asp-141.

Belongs to the RuvC family. As to quaternary structure, homodimer which binds Holliday junction (HJ) DNA. The HJ becomes 2-fold symmetrical on binding to RuvC with unstacked arms; it has a different conformation from HJ DNA in complex with RuvA. In the full resolvosome a probable DNA-RuvA(4)-RuvB(12)-RuvC(2) complex forms which resolves the HJ. It depends on Mg(2+) as a cofactor.

Its subcellular location is the cytoplasm. The catalysed reaction is Endonucleolytic cleavage at a junction such as a reciprocal single-stranded crossover between two homologous DNA duplexes (Holliday junction).. Functionally, the RuvA-RuvB-RuvC complex processes Holliday junction (HJ) DNA during genetic recombination and DNA repair. Endonuclease that resolves HJ intermediates. Cleaves cruciform DNA by making single-stranded nicks across the HJ at symmetrical positions within the homologous arms, yielding a 5'-phosphate and a 3'-hydroxyl group; requires a central core of homology in the junction. The consensus cleavage sequence is 5'-(A/T)TT(C/G)-3'. Cleavage occurs on the 3'-side of the TT dinucleotide at the point of strand exchange. HJ branch migration catalyzed by RuvA-RuvB allows RuvC to scan DNA until it finds its consensus sequence, where it cleaves and resolves the cruciform DNA. In Campylobacter jejuni subsp. jejuni serotype O:2 (strain ATCC 700819 / NCTC 11168), this protein is Crossover junction endodeoxyribonuclease RuvC.